Reading from the N-terminus, the 111-residue chain is 2Fe-2S ferredoxin (111 aa).

The 103-residue stretch at 2–104 folds into the 2Fe-2S ferredoxin-type domain; the sequence is PKIVILPHQD…DLVVEIPRYT (103 aa). [2Fe-2S] cluster-binding residues include Cys42, Cys48, Cys51, and Cys87.

This sequence belongs to the adrenodoxin/putidaredoxin family. The cofactor is [2Fe-2S] cluster.

Functionally, ferredoxin are iron-sulfur proteins that transfer electrons in a wide variety of metabolic reactions. Although the function of this ferredoxin is unknown it is probable that it has a role as a cellular electron transfer protein. Involved in the in vivo assembly of the Fe-S clusters in a wide variety of iron-sulfur proteins. This chain is 2Fe-2S ferredoxin (fdx), found in Escherichia coli O157:H7.